Reading from the N-terminus, the 99-residue chain is DNA-binding protein HU (99 aa).

Belongs to the bacterial histone-like protein family. Homodimer.

Functionally, histone-like DNA-binding protein which is capable of wrapping DNA to stabilize it, and thus to prevent its denaturation under extreme environmental conditions. The polypeptide is DNA-binding protein HU (hup) (Rickettsia typhi (strain ATCC VR-144 / Wilmington)).